A 1030-amino-acid chain; its full sequence is uncharacterized protein (1030 aa).

Over residues 1 to 15 (MSENSTDSKNFQFSE) the composition is skewed to polar residues. Positions 1 to 53 (MSENSTDSKNFQFSEGSRESSNDELKVLLRDTETKEDEKSSFSNSEEESIIEN) are disordered. Residues 16–40 (GSRESSNDELKVLLRDTETKEDEKS) are compositionally biased toward basic and acidic residues. S41 bears the Phosphoserine mark. Residues 134–290 (IKCVERMESV…WISEIHKQPC (157 aa)) enclose the Helicase ATP-binding domain. 147-154 (AHTSAGKT) contributes to the ATP binding site. The DEVH box motif lies at 238–241 (DEVH). In terms of domain architecture, Helicase C-terminal spans 357–561 (SLERIINMVL…GMILNLMRIE (205 aa)).

It belongs to the helicase family. SKI2 subfamily.

It localises to the nucleus. This is an uncharacterized protein from Schizosaccharomyces pombe (strain 972 / ATCC 24843) (Fission yeast).